Consider the following 555-residue polypeptide: MTRYIFITGGVVSSLGKGITSASLGAILEAQGLTVTLLKLDPYINVDPGTMSPFQHGEVFVTEDGAETDLDLGHYERFVNATMTRKNNFTTGRVYADVIRKERRGDYLGGTIQVIPHITDEIKVKIREGADGADVALVEVGGTVGDIESLPFLEAIRQMRIELGDQQTLFIHLTLVPYVAVAGEIKTKPTQHSVKELRSIGIQPDILVCRSEQPLPDAERAKIALFTNVPEPSVISLSDVKSIYEIPLILRDQGLGNRVCEKLNIKATAADLDDWKKVVQAQKNPRHTVTVAVVGKYVDLEDSYKSLSEALIHAGIHTQTRVVIEYIDSEAIELHGTELLKKVDAILVPGGFGSRGIEGKILAAQYARENGIPYLGICLGMQIAIIEFARHKAQMENANSTEFDPKTPFPVVALVSEWMAKEGIIEKRKWGDDLGGTMRLGGQPCRLKIDSLARRLYGEDRVIERHRHRYEVNNDLIGELEKKGLVISGRSIDDRLVEMIELADHPWFVGCQFHPEFTSTPRKGHPLFIGFIKAGLAAKEAKKAVLAAPSQEKTD.

The tract at residues 1–265 (MTRYIFITGG…GNRVCEKLNI (265 aa)) is amidoligase domain. Residue Ser-13 coordinates CTP. Ser-13 is a UTP binding site. ATP-binding positions include 14–19 (SLGKGI) and Asp-71. Residues Asp-71 and Glu-139 each coordinate Mg(2+). Residues 146–148 (DIE), 186–191 (KTKPTQ), and Lys-222 contribute to the CTP site. UTP-binding positions include 186–191 (KTKPTQ) and Lys-222. The Glutamine amidotransferase type-1 domain maps to 290 to 541 (TVAVVGKYVD…IKAGLAAKEA (252 aa)). Gly-351 is an L-glutamine binding site. Cys-378 serves as the catalytic Nucleophile; for glutamine hydrolysis. L-glutamine contacts are provided by residues 379–382 (LGMQ), Glu-402, and Arg-469. Catalysis depends on residues His-514 and Glu-516.

This sequence belongs to the CTP synthase family. Homotetramer.

The enzyme catalyses UTP + L-glutamine + ATP + H2O = CTP + L-glutamate + ADP + phosphate + 2 H(+). It catalyses the reaction L-glutamine + H2O = L-glutamate + NH4(+). It carries out the reaction UTP + NH4(+) + ATP = CTP + ADP + phosphate + 2 H(+). Its pathway is pyrimidine metabolism; CTP biosynthesis via de novo pathway; CTP from UDP: step 2/2. Its activity is regulated as follows. Allosterically activated by GTP, when glutamine is the substrate; GTP has no effect on the reaction when ammonia is the substrate. The allosteric effector GTP functions by stabilizing the protein conformation that binds the tetrahedral intermediate(s) formed during glutamine hydrolysis. Inhibited by the product CTP, via allosteric rather than competitive inhibition. Its function is as follows. Catalyzes the ATP-dependent amination of UTP to CTP with either L-glutamine or ammonia as the source of nitrogen. Regulates intracellular CTP levels through interactions with the four ribonucleotide triphosphates. This Coxiella burnetii (strain Dugway 5J108-111) protein is CTP synthase.